The following is a 252-amino-acid chain: MSDWNPSLYLHFAAERSRPAMELLARVPLENIEYVADLGCGPGNSTALLHQRWPAARITGIDSSPAMIAEARSALPDCQFVEADIRNWQPEQALDLIFANASLQWLPDHYELFPHLVSLLNSHGVLAVQMPDNWLEPTHVLMREVAWEQNYPDRGREPLAGVHAYYDILSEAGCEVDIWRTTYYHQMPSHQAIIDWVTATGLRPWLQDLTESEQQHFLTRYHQMLEEQYPLQENGEILLAFPRLFIVARRTE.

It belongs to the methyltransferase superfamily. Tam family.

The protein localises to the cytoplasm. It carries out the reaction trans-aconitate + S-adenosyl-L-methionine = (E)-3-(methoxycarbonyl)pent-2-enedioate + S-adenosyl-L-homocysteine. Functionally, catalyzes the S-adenosylmethionine monomethyl esterification of trans-aconitate. In Escherichia coli O7:K1 (strain IAI39 / ExPEC), this protein is Trans-aconitate 2-methyltransferase.